Consider the following 329-residue polypeptide: Carrier protein YMC2, mitochondrial (329 aa).

A disordered region spans residues 1–27 (MSEEFPTPQLLDELEDQQKVTTPNEKR). Residues 1–33 (MSEEFPTPQLLDELEDQQKVTTPNEKRELSSNR) constitute a mitochondrion transit peptide. Solcar repeat units lie at residues 34–115 (VLKD…MKRF), 143–226 (SQYY…LVAR), and 238–325 (PPWK…VMRF). The next 6 membrane-spanning stretches (helical) occupy residues 38 to 58 (IFAGTIGGIAQVLVGQPFDTT), 84 to 104 (VFAFYKGALTPLLGVGICVSV), 140 to 160 (LPLSQYYVCGLTGGVVNSFLA), 205 to 225 (TMIRAGHGLGTYFLVYEALVA), 243 to 263 (CLFGAFSGTMLWLTVYPLDVV), and 297 to 318 (FFKGFGPTMVRSAPVNGATFLT).

Belongs to the mitochondrial carrier (TC 2.A.29) family.

It localises to the mitochondrion inner membrane. This Saccharomyces cerevisiae (strain ATCC 204508 / S288c) (Baker's yeast) protein is Carrier protein YMC2, mitochondrial (YMC2).